A 397-amino-acid polypeptide reads, in one-letter code: Elongation factor Tu 2 (397 aa).

Residues 10 to 206 (KPHVNIGTIG…AIDTWIPEPV (197 aa)) enclose the tr-type G domain. The segment at 19–26 (GHVDHGKT) is G1. GTP is bound at residue 19-26 (GHVDHGKT). Thr26 is a Mg(2+) binding site. A G2 region spans residues 61-65 (GITIS). The tract at residues 82–85 (DCPG) is G3. GTP contacts are provided by residues 82–86 (DCPGH) and 137–140 (NKCD). Residues 137 to 140 (NKCD) are G4. Positions 175-177 (SAL) are G5.

It belongs to the TRAFAC class translation factor GTPase superfamily. Classic translation factor GTPase family. EF-Tu/EF-1A subfamily. Monomer.

It localises to the cytoplasm. It catalyses the reaction GTP + H2O = GDP + phosphate + H(+). Functionally, GTP hydrolase that promotes the GTP-dependent binding of aminoacyl-tRNA to the A-site of ribosomes during protein biosynthesis. This Alkaliphilus metalliredigens (strain QYMF) protein is Elongation factor Tu 2.